Reading from the N-terminus, the 148-residue chain is 18 kDa antigen (148 aa).

The sHSP domain occupies Thr21–Gly131.

It belongs to the small heat shock protein (HSP20) family.

Not known. This protein is one of the major immune reactive proteins in mycobacteria. The sequence is that of 18 kDa antigen (hsp18) from Mycobacterium leprae (strain TN).